The chain runs to 320 residues: Cytochrome f (320 aa).

The N-terminal stretch at M1–A35 is a signal peptide. Residues Y36, C56, C59, and H60 each contribute to the heme site. A helical membrane pass occupies residues V286 to K306.

This sequence belongs to the cytochrome f family. As to quaternary structure, the 4 large subunits of the cytochrome b6-f complex are cytochrome b6, subunit IV (17 kDa polypeptide, petD), cytochrome f and the Rieske protein, while the 4 small subunits are PetG, PetL, PetM and PetN. The complex functions as a dimer. Requires heme as cofactor.

The protein resides in the plastid. Its subcellular location is the chloroplast thylakoid membrane. Component of the cytochrome b6-f complex, which mediates electron transfer between photosystem II (PSII) and photosystem I (PSI), cyclic electron flow around PSI, and state transitions. This Lobularia maritima (Sweet alyssum) protein is Cytochrome f.